We begin with the raw amino-acid sequence, 957 residues long: Ribonuclease 3-like protein 3 (957 aa).

Residues 4–142 form the RNase III 1 domain; it reads VEAVEKILNY…IAATVFIDVN (139 aa). The DRBM 1 domain maps to 307 to 382; sequence NGRGELIEIC…AYHMIRALES (76 aa). The RNase III 2 domain occupies 415–551; that stretch reads VEAVEKILNY…VAGAVYIDVK (137 aa). 2 DRBM domains span residues 566 to 645 and 837 to 912; these read EPIY…KLSE and DEKG…ALES.

Ribonuclease that cleaves double-stranded RNA (dsRNA). The protein is Ribonuclease 3-like protein 3 (RTL3) of Arabidopsis thaliana (Mouse-ear cress).